A 236-amino-acid chain; its full sequence is LexA repressor (236 aa).

The segment at 1-25 (MNDSNDTSVAGGAAGADSRVLSADS) is disordered. The segment at residues 51–71 (IREIGDAVGLTSTSSVAHQLR) is a DNA-binding region (H-T-H motif). Catalysis depends on for autocatalytic cleavage activity residues S160 and K197.

This sequence belongs to the peptidase S24 family. As to quaternary structure, homodimer.

It catalyses the reaction Hydrolysis of Ala-|-Gly bond in repressor LexA.. Represses a number of genes involved in the response to DNA damage (SOS response), including recA and lexA. In the presence of single-stranded DNA, RecA interacts with LexA causing an autocatalytic cleavage which disrupts the DNA-binding part of LexA, leading to derepression of the SOS regulon and eventually DNA repair. The protein is LexA repressor of Mycobacterium tuberculosis (strain ATCC 25177 / H37Ra).